The primary structure comprises 86 residues: Large ribosomal subunit protein bL28 (86 aa).

This sequence belongs to the bacterial ribosomal protein bL28 family.

In Bacteroides fragilis (strain ATCC 25285 / DSM 2151 / CCUG 4856 / JCM 11019 / LMG 10263 / NCTC 9343 / Onslow / VPI 2553 / EN-2), this protein is Large ribosomal subunit protein bL28.